The following is a 547-amino-acid chain: Chaperonin GroEL (547 aa).

ATP is bound by residues 30–33, K51, 87–91, G415, 479–481, and D495; these read TLGP, DGTTT, and NAA.

This sequence belongs to the chaperonin (HSP60) family. Forms a cylinder of 14 subunits composed of two heptameric rings stacked back-to-back. Interacts with the co-chaperonin GroES.

The protein localises to the cytoplasm. The enzyme catalyses ATP + H2O + a folded polypeptide = ADP + phosphate + an unfolded polypeptide.. Its function is as follows. Together with its co-chaperonin GroES, plays an essential role in assisting protein folding. The GroEL-GroES system forms a nano-cage that allows encapsulation of the non-native substrate proteins and provides a physical environment optimized to promote and accelerate protein folding. The polypeptide is Chaperonin GroEL (Nitratidesulfovibrio vulgaris (strain ATCC 29579 / DSM 644 / CCUG 34227 / NCIMB 8303 / VKM B-1760 / Hildenborough) (Desulfovibrio vulgaris)).